A 229-amino-acid polypeptide reads, in one-letter code: tRNA (guanine-N(7)-)-methyltransferase (229 aa).

Glu-59, Glu-84, Asp-111, and Asp-134 together coordinate S-adenosyl-L-methionine. The active site involves Asp-134. Lys-138 contributes to the substrate binding site. Residues 140–145 (KHNKRR) form an interaction with RNA region. Substrate is bound by residues Asp-170 and 207–210 (TKFE).

This sequence belongs to the class I-like SAM-binding methyltransferase superfamily. TrmB family.

It catalyses the reaction guanosine(46) in tRNA + S-adenosyl-L-methionine = N(7)-methylguanosine(46) in tRNA + S-adenosyl-L-homocysteine. It participates in tRNA modification; N(7)-methylguanine-tRNA biosynthesis. In terms of biological role, catalyzes the formation of N(7)-methylguanine at position 46 (m7G46) in tRNA. The polypeptide is tRNA (guanine-N(7)-)-methyltransferase (Saccharophagus degradans (strain 2-40 / ATCC 43961 / DSM 17024)).